The chain runs to 341 residues: Uroporphyrinogen decarboxylase (341 aa).

Substrate is bound by residues 23–27 (RQAGR), Asp73, Tyr148, Ser203, and His318.

Belongs to the uroporphyrinogen decarboxylase family. As to quaternary structure, homodimer.

It is found in the cytoplasm. The enzyme catalyses uroporphyrinogen III + 4 H(+) = coproporphyrinogen III + 4 CO2. The protein operates within porphyrin-containing compound metabolism; protoporphyrin-IX biosynthesis; coproporphyrinogen-III from 5-aminolevulinate: step 4/4. Catalyzes the decarboxylation of four acetate groups of uroporphyrinogen-III to yield coproporphyrinogen-III. In Brucella anthropi (strain ATCC 49188 / DSM 6882 / CCUG 24695 / JCM 21032 / LMG 3331 / NBRC 15819 / NCTC 12168 / Alc 37) (Ochrobactrum anthropi), this protein is Uroporphyrinogen decarboxylase.